The following is a 453-amino-acid chain: tRNA modification GTPase MnmE (453 aa).

(6S)-5-formyl-5,6,7,8-tetrahydrofolate is bound by residues Arg22, Glu79, and Lys119. The TrmE-type G domain maps to 215–376 (GMKVVIAGRP…LKQHLKSLMG (162 aa)). Residue Asn225 participates in K(+) binding. GTP contacts are provided by residues 225–230 (NAGKSS), 244–250 (TEIAGTT), 269–272 (DTAG), and 334–337 (NKAD). Position 229 (Ser229) interacts with Mg(2+). 3 residues coordinate K(+): Thr244, Ile246, and Thr249. Residue Thr250 participates in Mg(2+) binding. Lys453 provides a ligand contact to (6S)-5-formyl-5,6,7,8-tetrahydrofolate.

The protein belongs to the TRAFAC class TrmE-Era-EngA-EngB-Septin-like GTPase superfamily. TrmE GTPase family. Homodimer. Heterotetramer of two MnmE and two MnmG subunits. It depends on K(+) as a cofactor.

Its subcellular location is the cytoplasm. In terms of biological role, exhibits a very high intrinsic GTPase hydrolysis rate. Involved in the addition of a carboxymethylaminomethyl (cmnm) group at the wobble position (U34) of certain tRNAs, forming tRNA-cmnm(5)s(2)U34. This chain is tRNA modification GTPase MnmE, found in Shewanella denitrificans (strain OS217 / ATCC BAA-1090 / DSM 15013).